A 123-amino-acid chain; its full sequence is Large ribosomal subunit protein bL12 (123 aa).

This sequence belongs to the bacterial ribosomal protein bL12 family. Homodimer. Part of the ribosomal stalk of the 50S ribosomal subunit. Forms a multimeric L10(L12)X complex, where L10 forms an elongated spine to which 2 to 4 L12 dimers bind in a sequential fashion. Binds GTP-bound translation factors.

Forms part of the ribosomal stalk which helps the ribosome interact with GTP-bound translation factors. Is thus essential for accurate translation. In Shewanella amazonensis (strain ATCC BAA-1098 / SB2B), this protein is Large ribosomal subunit protein bL12.